Consider the following 67-residue polypeptide: Large ribosomal subunit protein eL38 (67 aa).

The protein belongs to the eukaryotic ribosomal protein eL38 family.

The protein is Large ribosomal subunit protein eL38 (rpl38e) of Aeropyrum pernix (strain ATCC 700893 / DSM 11879 / JCM 9820 / NBRC 100138 / K1).